The following is a 662-amino-acid chain: Glutathione hydrolase 7 (662 aa).

The Cytoplasmic portion of the chain corresponds to 1-106; that stretch reads MAAENEASQE…AAECSCRQDG (106 aa). Phosphoserine occurs at positions 17, 72, 79, and 83. Positions 26 to 90 are disordered; the sequence is SFPRLPEDEP…DGSPLRETRK (65 aa). The segment covering 72-83 has biased composition (low complexity); that stretch reads SSSSEMGSQDGS. A helical; Signal-anchor for type II membrane protein membrane pass occupies residues 107-127; that stretch reads LTVIVTACLTFATGVTVALVM. Over 128 to 662 the chain is Extracellular; sequence QIYFGDPQIF…SPDAAGATIL (535 aa). 9 N-linked (GlcNAc...) asparagine glycosylation sites follow: Asn-198, Asn-267, Asn-283, Asn-330, Asn-353, Asn-394, Asn-519, Asn-523, and Asn-586.

This sequence belongs to the gamma-glutamyltransferase family. Heterodimer composed of the light and heavy chains. The active site is located in the light chain. Cleaved by autocatalysis into a large and a small subunit and the autocatalytic cleavage is essential to the functional activation of the enzyme.

It is found in the membrane. The enzyme catalyses an N-terminal (5-L-glutamyl)-[peptide] + an alpha-amino acid = 5-L-glutamyl amino acid + an N-terminal L-alpha-aminoacyl-[peptide]. It catalyses the reaction glutathione + H2O = L-cysteinylglycine + L-glutamate. It carries out the reaction an S-substituted glutathione + H2O = an S-substituted L-cysteinylglycine + L-glutamate. It participates in sulfur metabolism; glutathione metabolism. Its function is as follows. Hydrolyzes and transfers gamma-glutamyl moieties from glutathione and other gamma-glutamyl compounds to acceptors. This chain is Glutathione hydrolase 7, found in Mus musculus (Mouse).